Reading from the N-terminus, the 396-residue chain is S-adenosylmethionine synthase (396 aa).

Histidine 14 contributes to the ATP binding site. Mg(2+) is bound at residue aspartate 16. A K(+)-binding site is contributed by glutamate 42. The L-methionine site is built by glutamate 55 and glutamine 98. Positions 98–108 (QSPDIALGVNK) are flexible loop. ATP contacts are provided by residues 174 to 176 (DGK), 241 to 242 (RF), aspartate 250, 256 to 257 (RK), alanine 273, and lysine 277. Residue aspartate 250 coordinates L-methionine. Residue lysine 281 participates in L-methionine binding.

This sequence belongs to the AdoMet synthase family. As to quaternary structure, homotetramer; dimer of dimers. The cofactor is Mg(2+). K(+) serves as cofactor.

The protein resides in the cytoplasm. It catalyses the reaction L-methionine + ATP + H2O = S-adenosyl-L-methionine + phosphate + diphosphate. The protein operates within amino-acid biosynthesis; S-adenosyl-L-methionine biosynthesis; S-adenosyl-L-methionine from L-methionine: step 1/1. In terms of biological role, catalyzes the formation of S-adenosylmethionine (AdoMet) from methionine and ATP. The overall synthetic reaction is composed of two sequential steps, AdoMet formation and the subsequent tripolyphosphate hydrolysis which occurs prior to release of AdoMet from the enzyme. The polypeptide is S-adenosylmethionine synthase (Pseudothermotoga lettingae (strain ATCC BAA-301 / DSM 14385 / NBRC 107922 / TMO) (Thermotoga lettingae)).